The chain runs to 291 residues: N-acetylmannosamine kinase (291 aa).

ATP contacts are provided by residues 5-12 (AIDIGGTK) and 132-139 (GVGGGVVS). H156, C166, C168, and C173 together coordinate Zn(2+).

It belongs to the ROK (NagC/XylR) family. NanK subfamily. As to quaternary structure, homodimer.

The enzyme catalyses an N-acyl-D-mannosamine + ATP = an N-acyl-D-mannosamine 6-phosphate + ADP + H(+). It functions in the pathway amino-sugar metabolism; N-acetylneuraminate degradation; D-fructose 6-phosphate from N-acetylneuraminate: step 2/5. Catalyzes the phosphorylation of N-acetylmannosamine (ManNAc) to ManNAc-6-P. The sequence is that of N-acetylmannosamine kinase from Escherichia coli (strain SE11).